Consider the following 130-residue polypeptide: Metastasis-suppressor KiSS-1 (130 aa).

The first 19 residues, 1–19, serve as a signal peptide directing secretion; that stretch reads MISLASWQLLLLLCVASFG. Residues 52-91 form a disordered region; it reads RYAESKPGAAGLRARRTSPCPPVENPTGHQRPPCATRSRL. Cysteines 71 and 85 form a disulfide. Phosphotyrosine is present on Tyr110. Positions 110-119 are essential for receptor binding and receptor activation; sequence YNWNSFGLRY. A Tyrosine amide modification is found at Tyr119.

This sequence belongs to the KISS1 family. Highest levels in the cecum and colon. Moderate levels present in the liver, spleen, kidney, ovary, uterus and small intestine. Low levels in the stomach, pancreas and placenta. Expressed only moderately in the placenta. Persistent expression is detected in hypothalamus throughout postnatal development, with maximum expression levels at puberty in both male and female. Hypothalamic expression is sensitive to neonatal imprinting by estrogen. Expression is higher in the hypothalamus than in the brainstem and spinal cord. In the brain, metastin-like immunoreactivity is found mainly in three groups of cells: dorsomedial hypothalamic nucleus, nucleus of the solitary tract, and caudal ventrolateral medulla.

It localises to the secreted. Its function is as follows. Metastasis suppressor protein. May regulate events downstream of cell-matrix adhesion, perhaps involving cytoskeletal reorganization. Generates a C-terminally amidated peptide, metastin which functions as the endogenous ligand of the G-protein coupled receptor GPR54. The receptor is also essential for normal gonadotropin-released hormone physiology and for puberty. The hypothalamic KiSS1/GPR54 system is a pivotal factor in central regulation of the gonadotropic axis at puberty and in adulthood. Intracerebroventricular administration induces an increase in serum LH and FSH levels in prepubertal male and female as well as in adult animals. In Rattus norvegicus (Rat), this protein is Metastasis-suppressor KiSS-1 (Kiss1).